The following is a 234-amino-acid chain: Glycerol uptake facilitator protein (234 aa).

6 consecutive transmembrane segments (helical) span residues F9 to P29, G37 to G57, P61 to A81, V83 to L103, L135 to Y155, and A159 to G179. An NPA 1 motif is present at residues N65–A67. Residues N186–A188 carry the NPA 2 motif. A helical transmembrane segment spans residues W214–F234.

Belongs to the MIP/aquaporin (TC 1.A.8) family.

The protein resides in the cell membrane. It catalyses the reaction glycerol(in) = glycerol(out). Functionally, mediates glycerol diffusion across the cytoplasmic membrane via a pore-type mechanism. This Streptococcus pneumoniae (strain ATCC BAA-255 / R6) protein is Glycerol uptake facilitator protein (glpF).